A 462-amino-acid chain; its full sequence is Spermatogenesis- and oogenesis-specific basic helix-loop-helix-containing protein 2 (462 aa).

One can recognise a bHLH domain in the interval 200 to 251 (KASFLHSSKEKLRRERIKFCCEQLRTLLPYVKGRKSDVASVIEATVDYVKQV). The tract at residues 422 to 462 (PASSRTASSSIFRGFRESDSGHQASQQPTGPSLQPQDSSYF) is disordered. The span at 442 to 462 (GHQASQQPTGPSLQPQDSSYF) shows a compositional bias: polar residues.

The protein resides in the nucleus. Functionally, probable transcription factor, which may be involved in spermatogenesis and oogenesis. The chain is Spermatogenesis- and oogenesis-specific basic helix-loop-helix-containing protein 2 (Sohlh2) from Rattus norvegicus (Rat).